Reading from the N-terminus, the 204-residue chain is Large ribosomal subunit protein uL13 (204 aa).

This sequence belongs to the universal ribosomal protein uL13 family.

The sequence is that of Large ribosomal subunit protein uL13 (RpL13A) from Spodoptera frugiperda (Fall armyworm).